The following is a 436-amino-acid chain: 3-ketoacyl-CoA thiolase (436 aa).

C99 functions as the Acyl-thioester intermediate in the catalytic mechanism. Residues H392 and C422 each act as proton acceptor in the active site.

Belongs to the thiolase-like superfamily. Thiolase family. In terms of assembly, heterotetramer of two alpha chains (FadJ) and two beta chains (FadI).

Its subcellular location is the cytoplasm. The enzyme catalyses an acyl-CoA + acetyl-CoA = a 3-oxoacyl-CoA + CoA. Its pathway is lipid metabolism; fatty acid beta-oxidation. Functionally, catalyzes the final step of fatty acid oxidation in which acetyl-CoA is released and the CoA ester of a fatty acid two carbons shorter is formed. In Salmonella schwarzengrund (strain CVM19633), this protein is 3-ketoacyl-CoA thiolase.